The sequence spans 344 residues: Dihydroorotase (344 aa).

Residues His-14 and His-16 each coordinate Zn(2+). Substrate-binding positions include 16–18 (HLR) and Asn-42. Zn(2+) contacts are provided by Lys-100, His-137, and His-175. Lys-100 is subject to N6-carboxylysine. His-137 is a substrate binding site. Leu-220 contributes to the substrate binding site. A Zn(2+)-binding site is contributed by Asp-248. The active site involves Asp-248. Substrate contacts are provided by His-252 and Ala-264.

The protein belongs to the metallo-dependent hydrolases superfamily. DHOase family. Class II DHOase subfamily. Homodimer. It depends on Zn(2+) as a cofactor.

It carries out the reaction (S)-dihydroorotate + H2O = N-carbamoyl-L-aspartate + H(+). It functions in the pathway pyrimidine metabolism; UMP biosynthesis via de novo pathway; (S)-dihydroorotate from bicarbonate: step 3/3. Its function is as follows. Catalyzes the reversible cyclization of carbamoyl aspartate to dihydroorotate. This Cupriavidus metallidurans (strain ATCC 43123 / DSM 2839 / NBRC 102507 / CH34) (Ralstonia metallidurans) protein is Dihydroorotase.